We begin with the raw amino-acid sequence, 502 residues long: Potassium channel KAT3 (502 aa).

Over 1–67 (MPRSSRMNLW…PYDPRYKVWE (67 aa)) the chain is Cytoplasmic. The helical transmembrane segment at 68–88 (TFLIILVVYSAWICPLEFAFL) threads the bilayer. Residues 89 to 95 (RYLPSAP) are Extracellular-facing. Residues 96-116 (FVVDDVVNGFFAVDIMLTFFV) traverse the membrane as a helical segment. The Cytoplasmic segment spans residues 117–138 (PFVDKKSYLLVNDPKKIAVRYL). The helical transmembrane segment at 139–159 (SSWFVFDVCSTVPFHSISLLF) threads the bilayer. The Extracellular segment spans residues 160-169 (NEHGHDLGFK). Residues 170 to 190 (FLNVLRLWRLRRVSSMFARLE) form a helical; Voltage-sensor membrane-spanning segment. The Cytoplasmic segment spans residues 191–204 (KDIRFNYAVIRCTK). Residues 205 to 225 (LISVTLFAIHCAGCINYLIAD) form a helical membrane-spanning segment. Topologically, residues 226–252 (RYPDPRRTWIGAVMPNFREDGLWIRYV) are extracellular. An intramembrane region (pore-forming) is located at residues 253–272 (TAMYWSITTLTTTGYGDLHA). Residues 273 to 276 (ENAR) lie on the Extracellular side of the membrane. The helical transmembrane segment at 277–297 (EMLFGICYMLFNLWLTAYLIG) threads the bilayer. Residues 298 to 502 (NMTNLVVHST…IRSNLQQVNV (205 aa)) are Cytoplasmic-facing. 381 to 500 (LFKGVSSRFI…DIIRSNLQQV (120 aa)) is a binding site for a nucleoside 3',5'-cyclic phosphate.

The protein belongs to the potassium channel family. Plant (TC 1.A.1.4) subfamily.

Its subcellular location is the membrane. Functionally, probable inward-rectifying potassium channel. Assuming opened or closed conformations in response to the voltage difference across the membrane, the channel is activated by hyperpolarization. The protein is Potassium channel KAT3 of Oryza sativa subsp. japonica (Rice).